We begin with the raw amino-acid sequence, 451 residues long: tRNA-2-methylthio-N(6)-dimethylallyladenosine synthase (451 aa).

The 119-residue stretch at 10–128 (KKFYTLTFGC…FPQLLEHVMQ (119 aa)) folds into the MTTase N-terminal domain. The [4Fe-4S] cluster site is built by Cys19, Cys55, Cys89, Cys165, Cys169, and Cys172. In terms of domain architecture, Radical SAM core spans 151 to 381 (REDSIKAWVV…ISVQQEISEQ (231 aa)). One can recognise a TRAM domain in the interval 384 to 447 (KDLENTVQRI…SWNLYGEIFE (64 aa)).

This sequence belongs to the methylthiotransferase family. MiaB subfamily. As to quaternary structure, monomer. [4Fe-4S] cluster serves as cofactor.

The protein resides in the cytoplasm. It carries out the reaction N(6)-dimethylallyladenosine(37) in tRNA + (sulfur carrier)-SH + AH2 + 2 S-adenosyl-L-methionine = 2-methylsulfanyl-N(6)-dimethylallyladenosine(37) in tRNA + (sulfur carrier)-H + 5'-deoxyadenosine + L-methionine + A + S-adenosyl-L-homocysteine + 2 H(+). Functionally, catalyzes the methylthiolation of N6-(dimethylallyl)adenosine (i(6)A), leading to the formation of 2-methylthio-N6-(dimethylallyl)adenosine (ms(2)i(6)A) at position 37 in tRNAs that read codons beginning with uridine. The sequence is that of tRNA-2-methylthio-N(6)-dimethylallyladenosine synthase from Natranaerobius thermophilus (strain ATCC BAA-1301 / DSM 18059 / JW/NM-WN-LF).